A 224-amino-acid chain; its full sequence is Respiratory supercomplex factor 2, mitochondrial (224 aa).

Residues 1-13 (MKILTQDEIEAHR) are Mitochondrial intermembrane-facing. Residues 14–38 (SHTLKGGIEGALAGFAISAIIFKVL) traverse the membrane as a helical segment. At 39–47 (PRRYPKFKP) the chain is on the mitochondrial matrix side. The chain crosses the membrane as a helical span at residues 48-75 (STLTWSIKTALWITPPTVLTAICAEEAS). The Mitochondrial intermembrane portion of the chain corresponds to 76 to 103 (NNFDATMYGSGSSSEDALDEHRRWKSLS). Positions 89-180 (SEDALDEHRR…YENKLHPNKQ (92 aa)) constitute an HIG1 domain. A helical transmembrane segment spans residues 104–133 (TKDKFVEGLSNNKYKIITGAWAASLYGSWV). Residues 134-142 (IVNKDPIMT) lie on the Mitochondrial matrix side of the membrane. A helical membrane pass occupies residues 143 to 173 (KAQKIVQARMYAQFITVGLLLASVGLSMYEN). The Mitochondrial intermembrane portion of the chain corresponds to 174–184 (KLHPNKQKVNE). Residues 185–204 (MRRWENALRVAEEEERLEKE) traverse the membrane as a helical segment. The Mitochondrial matrix portion of the chain corresponds to 205 to 224 (GRRTGYVSNEERINSKIFKS).

In terms of assembly, associates with a subpopulation of the cytochrome bc1-cytochrome c oxidase supercomplexes. Associates in substoichiometric amounts with complex IV. Interacts with COX3.

The protein resides in the mitochondrion membrane. In terms of biological role, assembly factor that plays a role in the assembly of the respiratory chain supercomplexes (SCs) composed of ubiquinol-cytochrome c oxidoreductase (cytochrome b-c1 complex, complex III, CIII) and cytochrome c oxidase (complex IV, CIV). May be required for late-stage assembly of the COX12 and COX13 subunits. Required for the generation and maintenance of a normal proton motive force (PMF) across the inner mitochondrial membrane (IMM) by preventing proton leakage through an inactive population of CIV that accumulates when RCF1 and/or RCF2 proteins are absent. This chain is Respiratory supercomplex factor 2, mitochondrial (RCF2), found in Saccharomyces cerevisiae (strain ATCC 204508 / S288c) (Baker's yeast).